The sequence spans 364 residues: Aminomethyltransferase (364 aa).

The protein belongs to the GcvT family. In terms of assembly, the glycine cleavage system is composed of four proteins: P, T, L and H.

The enzyme catalyses N(6)-[(R)-S(8)-aminomethyldihydrolipoyl]-L-lysyl-[protein] + (6S)-5,6,7,8-tetrahydrofolate = N(6)-[(R)-dihydrolipoyl]-L-lysyl-[protein] + (6R)-5,10-methylene-5,6,7,8-tetrahydrofolate + NH4(+). Its function is as follows. The glycine cleavage system catalyzes the degradation of glycine. The sequence is that of Aminomethyltransferase from Shewanella loihica (strain ATCC BAA-1088 / PV-4).